The following is a 119-amino-acid chain: Virulence protein VsdF (119 aa).

Functionally, expressed but non-essential protein, involved in the virulence of Salmonellas. The chain is Virulence protein VsdF (vsdF) from Salmonella dublin.